The following is a 208-amino-acid chain: FMN-dependent NADH:quinone oxidoreductase 1 (208 aa).

Residues Ser-10, 15-17 (SES), and 97-100 (MWNF) each bind FMN.

This sequence belongs to the azoreductase type 1 family. Homodimer. The cofactor is FMN.

It catalyses the reaction 2 a quinone + NADH + H(+) = 2 a 1,4-benzosemiquinone + NAD(+). The enzyme catalyses N,N-dimethyl-1,4-phenylenediamine + anthranilate + 2 NAD(+) = 2-(4-dimethylaminophenyl)diazenylbenzoate + 2 NADH + 2 H(+). Functionally, quinone reductase that provides resistance to thiol-specific stress caused by electrophilic quinones. In terms of biological role, also exhibits azoreductase activity. Catalyzes the reductive cleavage of the azo bond in aromatic azo compounds to the corresponding amines. This chain is FMN-dependent NADH:quinone oxidoreductase 1, found in Bradyrhizobium diazoefficiens (strain JCM 10833 / BCRC 13528 / IAM 13628 / NBRC 14792 / USDA 110).